The following is an 84-amino-acid chain: Large ribosomal subunit protein bL27 (84 aa).

The tract at residues 1 to 22 is disordered; that stretch reads MAHKKAGGSTRNGRDSESKRLG.

It belongs to the bacterial ribosomal protein bL27 family.

This Shewanella denitrificans (strain OS217 / ATCC BAA-1090 / DSM 15013) protein is Large ribosomal subunit protein bL27.